A 327-amino-acid chain; its full sequence is MVVELKNIEKIYENGFHALKGVDLELKKGDILGVIGYSGAGKSTLIRLINCLERPSSGEVLVNGVNLLQLKPKELQKARQKIGMIFQHFNLLSAKNVFENVAFALEIAQWEKNKIKSRVHELLELVGLEDKMHFYPKQLSGGQKQRVAIARSLANYPNLLLCDEATSALDSKTTHSILTLLRDIQKKLDLSVVFITHEIEVVKELCNQMCVISNGKIVERGLVEEIFANPKHAVTKELIGIKNEHADKKSQNVYRIVFLGEHLDEPIISNLIRRFKIDVSIISGNIEELTTKDIGYLVVRFLGSIAETQRALEYLNALGLQVEKLKD.

The ABC transporter domain occupies 3–239 (VELKNIEKIY…PKHAVTKELI (237 aa)). 36–43 (GYSGAGKS) contributes to the ATP binding site.

It belongs to the ABC transporter superfamily. Methionine importer (TC 3.A.1.24) family. As to quaternary structure, the complex is composed of two ATP-binding proteins (MetN), two transmembrane proteins (MetI) and a solute-binding protein (MetQ).

The protein resides in the cell inner membrane. The catalysed reaction is L-methionine(out) + ATP + H2O = L-methionine(in) + ADP + phosphate + H(+). The enzyme catalyses D-methionine(out) + ATP + H2O = D-methionine(in) + ADP + phosphate + H(+). Part of the ABC transporter complex MetNIQ involved in methionine import. Responsible for energy coupling to the transport system. The protein is Methionine import ATP-binding protein MetN of Helicobacter acinonychis (strain Sheeba).